The primary structure comprises 141 residues: Small ribosomal subunit protein uS12 (141 aa).

A disordered region spans residues 118 to 141; sequence TGVDKRRQQRSAYGAKRPKADKKK.

It belongs to the universal ribosomal protein uS12 family. Part of the 30S ribosomal subunit. Contacts proteins S8 and S17. May interact with IF1 in the 30S initiation complex.

Its function is as follows. With S4 and S5 plays an important role in translational accuracy. Functionally, interacts with and stabilizes bases of the 16S rRNA that are involved in tRNA selection in the A site and with the mRNA backbone. Located at the interface of the 30S and 50S subunits, it traverses the body of the 30S subunit contacting proteins on the other side and probably holding the rRNA structure together. The combined cluster of proteins S8, S12 and S17 appears to hold together the shoulder and platform of the 30S subunit. The protein is Small ribosomal subunit protein uS12 of Mycoplasmoides gallisepticum (strain R(low / passage 15 / clone 2)) (Mycoplasma gallisepticum).